The chain runs to 227 residues: Cytochrome c oxidase subunit 2 (227 aa).

The Mitochondrial intermembrane portion of the chain corresponds to 1–14; sequence MAYPFQLGLQDATS. Residues 15 to 45 traverse the membrane as a helical segment; the sequence is PIMEELMNFHDHTLMIVFLISSLVLYIISLM. The Mitochondrial matrix portion of the chain corresponds to 46 to 59; the sequence is LTTKLTHTSTMDAQ. Residues 60-87 traverse the membrane as a helical segment; the sequence is EVETIWTILPAVILILIALPSLRILYMM. At 88-227 the chain is on the mitochondrial intermembrane side; sequence DEINNPVLTV…NFENWSASMI (140 aa). Cu cation-binding residues include His161, Cys196, Glu198, Cys200, His204, and Met207. Glu198 serves as a coordination point for Mg(2+).

This sequence belongs to the cytochrome c oxidase subunit 2 family. In terms of assembly, component of the cytochrome c oxidase (complex IV, CIV), a multisubunit enzyme composed of 14 subunits. The complex is composed of a catalytic core of 3 subunits MT-CO1, MT-CO2 and MT-CO3, encoded in the mitochondrial DNA, and 11 supernumerary subunits COX4I, COX5A, COX5B, COX6A, COX6B, COX6C, COX7A, COX7B, COX7C, COX8 and NDUFA4, which are encoded in the nuclear genome. The complex exists as a monomer or a dimer and forms supercomplexes (SCs) in the inner mitochondrial membrane with NADH-ubiquinone oxidoreductase (complex I, CI) and ubiquinol-cytochrome c oxidoreductase (cytochrome b-c1 complex, complex III, CIII), resulting in different assemblies (supercomplex SCI(1)III(2)IV(1) and megacomplex MCI(2)III(2)IV(2)). Found in a complex with TMEM177, COA6, COX18, COX20, SCO1 and SCO2. Interacts with TMEM177 in a COX20-dependent manner. Interacts with COX20. Interacts with COX16. Requires Cu cation as cofactor.

It is found in the mitochondrion inner membrane. The enzyme catalyses 4 Fe(II)-[cytochrome c] + O2 + 8 H(+)(in) = 4 Fe(III)-[cytochrome c] + 2 H2O + 4 H(+)(out). In terms of biological role, component of the cytochrome c oxidase, the last enzyme in the mitochondrial electron transport chain which drives oxidative phosphorylation. The respiratory chain contains 3 multisubunit complexes succinate dehydrogenase (complex II, CII), ubiquinol-cytochrome c oxidoreductase (cytochrome b-c1 complex, complex III, CIII) and cytochrome c oxidase (complex IV, CIV), that cooperate to transfer electrons derived from NADH and succinate to molecular oxygen, creating an electrochemical gradient over the inner membrane that drives transmembrane transport and the ATP synthase. Cytochrome c oxidase is the component of the respiratory chain that catalyzes the reduction of oxygen to water. Electrons originating from reduced cytochrome c in the intermembrane space (IMS) are transferred via the dinuclear copper A center (CU(A)) of subunit 2 and heme A of subunit 1 to the active site in subunit 1, a binuclear center (BNC) formed by heme A3 and copper B (CU(B)). The BNC reduces molecular oxygen to 2 water molecules using 4 electrons from cytochrome c in the IMS and 4 protons from the mitochondrial matrix. This Maxomys bartelsii (Bartels's Javan maxomys) protein is Cytochrome c oxidase subunit 2 (MT-CO2).